Reading from the N-terminus, the 311-residue chain is Dermonecrotic toxin LlSicTox-alphaIII1i (311 aa).

The N-terminal stretch at 1-21 is a signal peptide; that stretch reads MYAHLALILGCWTVVLQGAET. Residues 22–26 constitute a propeptide that is removed on maturation; it reads DVGER. Histidine 38 is a catalytic residue. Residues glutamate 58 and aspartate 60 each contribute to the Mg(2+) site. The active-site Nucleophile is the histidine 73. A disulfide bridge links cysteine 77 with cysteine 83. Aspartate 117 lines the Mg(2+) pocket.

Belongs to the arthropod phospholipase D family. Class I subfamily. Mg(2+) serves as cofactor. As to expression, expressed by the venom gland.

It is found in the secreted. The catalysed reaction is an N-(acyl)-sphingosylphosphocholine = an N-(acyl)-sphingosyl-1,3-cyclic phosphate + choline. It catalyses the reaction an N-(acyl)-sphingosylphosphoethanolamine = an N-(acyl)-sphingosyl-1,3-cyclic phosphate + ethanolamine. It carries out the reaction a 1-acyl-sn-glycero-3-phosphocholine = a 1-acyl-sn-glycero-2,3-cyclic phosphate + choline. The enzyme catalyses a 1-acyl-sn-glycero-3-phosphoethanolamine = a 1-acyl-sn-glycero-2,3-cyclic phosphate + ethanolamine. Its function is as follows. Dermonecrotic toxins cleave the phosphodiester linkage between the phosphate and headgroup of certain phospholipids (sphingolipid and lysolipid substrates), forming an alcohol (often choline) and a cyclic phosphate. This toxin acts on sphingomyelin (SM) with high activity. It also act on acyl- and alkyl-lysophosphatidylcholine (LPC), but not on sphingosylphosphorylcholine (SPC) and phosphatidylcholine (PC). It may also act on ceramide phosphoethanolamine (CPE), and lysophosphatidylethanolamine (LPE), but not on lysophosphatidylserine (LPS), and lysophosphatidylglycerol (LPG). It acts by transphosphatidylation, releasing exclusively cyclic phosphate products as second products. Induces complement-dependent hemolysis and dermonecrosis. Also induces increased vascular permeability, edema, inflammatory response, and platelet aggregation. The sequence is that of Dermonecrotic toxin LlSicTox-alphaIII1i from Loxosceles laeta (South American recluse spider).